An 85-amino-acid polypeptide reads, in one-letter code: ATP synthase subunit c (85 aa).

The next 2 helical transmembrane spans lie at Ala-22–Ile-39 and Ala-65–Leu-85.

This sequence belongs to the ATPase C chain family. F-type ATPases have 2 components, F(1) - the catalytic core - and F(0) - the membrane proton channel. F(1) has five subunits: alpha(3), beta(3), gamma(1), delta(1), epsilon(1). F(0) has three main subunits: a(1), b(2) and c(10-14). The alpha and beta chains form an alternating ring which encloses part of the gamma chain. F(1) is attached to F(0) by a central stalk formed by the gamma and epsilon chains, while a peripheral stalk is formed by the delta and b chains.

The protein resides in the cell inner membrane. Its function is as follows. F(1)F(0) ATP synthase produces ATP from ADP in the presence of a proton or sodium gradient. F-type ATPases consist of two structural domains, F(1) containing the extramembraneous catalytic core and F(0) containing the membrane proton channel, linked together by a central stalk and a peripheral stalk. During catalysis, ATP synthesis in the catalytic domain of F(1) is coupled via a rotary mechanism of the central stalk subunits to proton translocation. In terms of biological role, key component of the F(0) channel; it plays a direct role in translocation across the membrane. A homomeric c-ring of between 10-14 subunits forms the central stalk rotor element with the F(1) delta and epsilon subunits. This Bacteroides thetaiotaomicron (strain ATCC 29148 / DSM 2079 / JCM 5827 / CCUG 10774 / NCTC 10582 / VPI-5482 / E50) protein is ATP synthase subunit c.